The primary structure comprises 294 residues: Cytidine deaminase (294 aa).

CMP/dCMP-type deaminase domains are found at residues 48 to 168 (DEDA…FGPK) and 186 to 294 (LTGD…VLLA). 89–91 (NME) contacts substrate. Residue His-102 participates in Zn(2+) binding. Residue Glu-104 is the Proton donor of the active site. 2 residues coordinate Zn(2+): Cys-129 and Cys-132.

The protein belongs to the cytidine and deoxycytidylate deaminase family. Homodimer. Zn(2+) is required as a cofactor.

The catalysed reaction is cytidine + H2O + H(+) = uridine + NH4(+). The enzyme catalyses 2'-deoxycytidine + H2O + H(+) = 2'-deoxyuridine + NH4(+). Functionally, this enzyme scavenges exogenous and endogenous cytidine and 2'-deoxycytidine for UMP synthesis. The protein is Cytidine deaminase of Escherichia coli O157:H7.